The primary structure comprises 227 residues: Transmembrane emp24 domain-containing protein 4 (227 aa).

The first 29 residues, 1-29, serve as a signal peptide directing secretion; it reads MAGVGAGPLRAMGRQALLLLALCATGAQG. Topologically, residues 30–194 are lumenal; sequence LYFHIGETEK…RLTSESTNQR (165 aa). Residues 39-137 enclose the GOLD domain; it reads KRCFIEEIPD…KLRVHLDIQV (99 aa). N-linked (GlcNAc...) asparagine glycosylation is present at Asn-117. Residues 147–176 adopt a coiled-coil conformation; it reads IAAKDKLTELQLRARQLLDQVEQIQKEQDY. The chain crosses the membrane as a helical span at residues 195 to 212; the sequence is VLWWSIAQTVILILTGIW. Residues 213–227 are Cytoplasmic-facing; the sequence is QMRHLKSFFEAKKLV. The short motif at 220 to 221 is the COPII vesicle coat-binding element; sequence FF. Residues 220–227 carry the COPI vesicle coat-binding motif; that stretch reads FFEAKKLV.

Belongs to the EMP24/GP25L family.

The protein resides in the endoplasmic reticulum membrane. Functionally, involved in vesicular protein trafficking, mainly in the early secretory pathway. targeting. Involved in the maintenance of the Golgi apparatus. Appears to play a role in the biosynthesis of secreted cargo including processing. Involved in endoplasmic reticulum stress response. May play a role in the regulation of heat-shock response and apoptosis. This chain is Transmembrane emp24 domain-containing protein 4 (TMED4), found in Homo sapiens (Human).